A 135-amino-acid chain; its full sequence is Ribosome-binding factor A (135 aa).

This sequence belongs to the RbfA family. Monomer. Binds 30S ribosomal subunits, but not 50S ribosomal subunits or 70S ribosomes.

The protein resides in the cytoplasm. In terms of biological role, one of several proteins that assist in the late maturation steps of the functional core of the 30S ribosomal subunit. Associates with free 30S ribosomal subunits (but not with 30S subunits that are part of 70S ribosomes or polysomes). Required for efficient processing of 16S rRNA. May interact with the 5'-terminal helix region of 16S rRNA. The chain is Ribosome-binding factor A from Methylobacterium nodulans (strain LMG 21967 / CNCM I-2342 / ORS 2060).